Reading from the N-terminus, the 867-residue chain is Alanine--tRNA ligase (867 aa).

Zn(2+) contacts are provided by histidine 558, histidine 562, cysteine 660, and histidine 664.

It belongs to the class-II aminoacyl-tRNA synthetase family. It depends on Zn(2+) as a cofactor.

It is found in the cytoplasm. It catalyses the reaction tRNA(Ala) + L-alanine + ATP = L-alanyl-tRNA(Ala) + AMP + diphosphate. Catalyzes the attachment of alanine to tRNA(Ala) in a two-step reaction: alanine is first activated by ATP to form Ala-AMP and then transferred to the acceptor end of tRNA(Ala). Also edits incorrectly charged Ser-tRNA(Ala) and Gly-tRNA(Ala) via its editing domain. In Fervidobacterium nodosum (strain ATCC 35602 / DSM 5306 / Rt17-B1), this protein is Alanine--tRNA ligase.